The primary structure comprises 72 residues: LKHEDTNLHISSQCWLKCLKNSKHNVVISSRGGLLFLRGMSHHPKPPQLRAVWAQSQEEGAPFLVLPLVQKP.

This sequence belongs to the arrestin family. As to expression, adrenal, cerebral cortex, heart, hypothalamus, intestine, liver, lung, pituitary, retina and testis.

The sequence is that of Arrestin-E (Ear) from Rattus norvegicus (Rat).